The primary structure comprises 2517 residues: Serine/threonine-protein kinase ATR (2517 aa).

An HEAT repeat occupies 1178–1214 (EPMLEQIVNVLMAGCQHDDSQLQMASAKCLGELGAID). The 558-residue stretch at 1509 to 2066 (LVSRASYNCG…LWMLLPHFKS (558 aa)) folds into the FAT domain. At Ser-1569 the chain carries Phosphoserine. Tyr-1570 is modified (phosphotyrosine). At Ser-1573 the chain carries Phosphoserine. Phosphothreonine is present on Thr-1575. Residues 2184 to 2508 (FQESVLILRS…EATKVDNLAS (325 aa)) enclose the PI3K/PI4K catalytic domain. The G-loop stretch occupies residues 2190–2196 (ILRSAAK). The segment at 2360–2368 (GLGDRHGEN) is catalytic loop. Residues 2380-2404 (HVDFNCLFNQGELLPYPEVVPFRLT) are activation loop. Positions 2485-2517 (IPLSTEGQVNFLINEATKVDNLASMYIGWGAFL) constitute an FATC domain.

This sequence belongs to the PI3/PI4-kinase family. ATM subfamily. Interacts with mus304. It depends on Mn(2+) as a cofactor.

It localises to the nucleus. The catalysed reaction is L-seryl-[protein] + ATP = O-phospho-L-seryl-[protein] + ADP + H(+). The enzyme catalyses L-threonyl-[protein] + ATP = O-phospho-L-threonyl-[protein] + ADP + H(+). Its function is as follows. Serine/threonine protein kinase which activates checkpoint signaling upon genotoxic stresses such as ionizing radiation (IR), ultraviolet light (UV), or DNA replication stalling, thereby acting as a DNA damage sensor. Recognizes the substrate consensus sequence [ST]-Q. Phosphorylates various proteins, which collectively inhibits DNA replication and mitosis and promotes DNA repair and recombination. Phosphorylates grp/CHK1. Phosphorylates 'Ser-137' of histone variant H2AX/H2AV at sites of DNA damage, thereby regulating DNA damage response mechanism. Essential for the DNA damage checkpoint in larval imaginal disks and neuroblasts and for the DNA replication checkpoint in the embryo. Also has an essential role during early nuclear divisions in embryos, where it is required to delay mitosis in response to incomplete DNA replication. Also plays an important role during meiosis, where it may monitor double-strand-break repair during meiotic crossing over, to regulate the progression of prophase I, and to enforce metaphase I delay observed at the end of oogenesis. Involved in telomere maintenance and prevention of telomere fusion; potentially functioning downstream of moi/modigliani. This is Serine/threonine-protein kinase ATR (mei-41) from Drosophila melanogaster (Fruit fly).